The chain runs to 70 residues: ATP synthase subunit epsilon, mitochondrial (70 aa).

This sequence belongs to the eukaryotic ATPase epsilon family. F-type ATPases have 2 components, CF(1) - the catalytic core - and CF(0) - the membrane proton channel. CF(1) has five subunits: alpha(3), beta(3), gamma(1), delta(1), epsilon(1). CF(0) has three main subunits: a, b and c.

Its subcellular location is the mitochondrion. The protein resides in the mitochondrion inner membrane. Mitochondrial membrane ATP synthase (F(1)F(0) ATP synthase or Complex V) produces ATP from ADP in the presence of a proton gradient across the membrane which is generated by electron transport complexes of the respiratory chain. F-type ATPases consist of two structural domains, F(1) - containing the extramembraneous catalytic core, and F(0) - containing the membrane proton channel, linked together by a central stalk and a peripheral stalk. During catalysis, ATP synthesis in the catalytic domain of F(1) is coupled via a rotary mechanism of the central stalk subunits to proton translocation. Part of the complex F(1) domain and of the central stalk which is part of the complex rotary element. Rotation of the central stalk against the surrounding alpha(3)beta(3) subunits leads to hydrolysis of ATP in three separate catalytic sites on the beta subunits. The protein is ATP synthase subunit epsilon, mitochondrial of Ipomoea batatas (Sweet potato).